Here is a 524-residue protein sequence, read N- to C-terminus: Leucine-rich repeat-containing protein 1 (524 aa).

LRR repeat units follow at residues 11–34 (NRHV…IYRY), 35–58 (ARSL…FFQL), 60–81 (KLRK…IANF), 83–105 (QLVE…SFCK), 107–126 (LQVA…SFPE), 127–149 (LQNL…NIGN), 150–172 (LYNL…SLTQ), 173–196 (LRRL…IGAL), 198–218 (HLKD…EIGN), 219–242 (LKNL…ISGL), 244–264 (SLTD…GIGK), 265–288 (LKKL…VGEC), 290–310 (SLTE…SIGK), 311–334 (LKKL…IGGC), 336–356 (SLTV…EVSQ), 357–380 (ATEL…LTAL), and 382–405 (LKAL…TDYT). Thr480 is modified (phosphothreonine). A coiled-coil region spans residues 484–512 (GELKHMKKTVENLRNDMNAAKGLDSNKNE).

In terms of assembly, interacts with DLG1 and DLG4. May form a complex with DLG1 and ERBIN, where interaction between LRRC1 and ERBIN is indirect. As to expression, expressed strongly in testis and placenta, followed by heart, lung, kidney, thyroid, trachea, colon, prostate and pancreas.

Its subcellular location is the cytoplasm. The protein resides in the membrane. The chain is Leucine-rich repeat-containing protein 1 (LRRC1) from Homo sapiens (Human).